The chain runs to 334 residues: Holliday junction branch migration complex subunit RuvB (334 aa).

Residues 4–184 (ADRLISAGVI…FGIVQRLEFY (181 aa)) are large ATPase domain (RuvB-L). ATP-binding positions include isoleucine 23, arginine 24, glycine 65, lysine 68, threonine 69, threonine 70, 131-133 (EDY), arginine 174, tyrosine 184, and arginine 221. Residue threonine 69 coordinates Mg(2+). Residues 185–255 (QVADLEHIVS…VAMKALDMLN (71 aa)) form a small ATPAse domain (RuvB-S) region. Positions 258–334 (AEGFDFMDRK…YKHFGITREE (77 aa)) are head domain (RuvB-H). Residues arginine 294, arginine 313, and arginine 318 each coordinate DNA.

The protein belongs to the RuvB family. Homohexamer. Forms an RuvA(8)-RuvB(12)-Holliday junction (HJ) complex. HJ DNA is sandwiched between 2 RuvA tetramers; dsDNA enters through RuvA and exits via RuvB. An RuvB hexamer assembles on each DNA strand where it exits the tetramer. Each RuvB hexamer is contacted by two RuvA subunits (via domain III) on 2 adjacent RuvB subunits; this complex drives branch migration. In the full resolvosome a probable DNA-RuvA(4)-RuvB(12)-RuvC(2) complex forms which resolves the HJ.

It is found in the cytoplasm. It carries out the reaction ATP + H2O = ADP + phosphate + H(+). Functionally, the RuvA-RuvB-RuvC complex processes Holliday junction (HJ) DNA during genetic recombination and DNA repair, while the RuvA-RuvB complex plays an important role in the rescue of blocked DNA replication forks via replication fork reversal (RFR). RuvA specifically binds to HJ cruciform DNA, conferring on it an open structure. The RuvB hexamer acts as an ATP-dependent pump, pulling dsDNA into and through the RuvAB complex. RuvB forms 2 homohexamers on either side of HJ DNA bound by 1 or 2 RuvA tetramers; 4 subunits per hexamer contact DNA at a time. Coordinated motions by a converter formed by DNA-disengaged RuvB subunits stimulates ATP hydrolysis and nucleotide exchange. Immobilization of the converter enables RuvB to convert the ATP-contained energy into a lever motion, pulling 2 nucleotides of DNA out of the RuvA tetramer per ATP hydrolyzed, thus driving DNA branch migration. The RuvB motors rotate together with the DNA substrate, which together with the progressing nucleotide cycle form the mechanistic basis for DNA recombination by continuous HJ branch migration. Branch migration allows RuvC to scan DNA until it finds its consensus sequence, where it cleaves and resolves cruciform DNA. The polypeptide is Holliday junction branch migration complex subunit RuvB (Yersinia enterocolitica serotype O:8 / biotype 1B (strain NCTC 13174 / 8081)).